The primary structure comprises 436 residues: UDP-N-acetylmuramate--L-alanine ligase (436 aa).

Gly108–Ser114 contacts ATP.

Belongs to the MurCDEF family.

Its subcellular location is the cytoplasm. The catalysed reaction is UDP-N-acetyl-alpha-D-muramate + L-alanine + ATP = UDP-N-acetyl-alpha-D-muramoyl-L-alanine + ADP + phosphate + H(+). Its pathway is cell wall biogenesis; peptidoglycan biosynthesis. Cell wall formation. The sequence is that of UDP-N-acetylmuramate--L-alanine ligase from Bacillus cereus (strain ZK / E33L).